The primary structure comprises 543 residues: Aluminum-activated malate transporter 14 (543 aa).

6 helical membrane-spanning segments follow: residues 56-76, 80-100, 106-126, 129-149, 164-184, and 191-211; these read VGVS…FKGI, AIWA…ATLC, GLGT…ANDS, IFRA…ITYL, LIFL…DTVI, and FYTI…VFPI. The disordered stretch occupies residues 416–438; sequence DTNEAASYQNTGTPRGERMSRFG. Residues 419–428 are compositionally biased toward polar residues; it reads EAASYQNTGT. Positions 445–472 form a coiled coil; it reads RLRADTLERRSAAATNERKILRQQLSRI.

This sequence belongs to the aromatic acid exporter (TC 2.A.85) family.

It localises to the membrane. Functionally, malate transporter. The sequence is that of Aluminum-activated malate transporter 14 (ALMT14) from Arabidopsis thaliana (Mouse-ear cress).